The sequence spans 34 residues: Mu-theraphotoxin-Df1a (34 aa).

Cystine bridges form between C2–C16, C9–C21, and C15–C28. F34 is modified (phenylalanine amide).

Belongs to the neurotoxin 10 (Hwtx-1) family. 54 (ProTx-1) subfamily. In terms of processing, C-terminal amidation is important for the high potency of the toxin. In terms of tissue distribution, expressed by the venom gland.

The protein resides in the secreted. In terms of biological role, inhibits sodium channel Nav1.7/SCN9A with high potency (IC(50)=117 nM) and Nav1.2/SCN2A, Nav1.3/SCN3A, Nav1.6/SCN8A and Nav1.5/SCN5 with weaker potency. Also inhibits voltage-gated calcium channel Cav3.1/CACNA1G, Cav3.2/CACNA1H and Cav3.3/CACNA1I. This Davus fasciatus (Costa Rican tiger rump) protein is Mu-theraphotoxin-Df1a.